Consider the following 378-residue polypeptide: Erythronate-4-phosphate dehydrogenase (378 aa).

Substrate-binding residues include serine 45 and threonine 66. The NAD(+) site is built by aspartate 146 and threonine 175. Arginine 208 is an active-site residue. Residue aspartate 232 coordinates NAD(+). Glutamate 237 is an active-site residue. Histidine 254 functions as the Proton donor in the catalytic mechanism. Glycine 257 contributes to the NAD(+) binding site. A substrate-binding site is contributed by tyrosine 258.

The protein belongs to the D-isomer specific 2-hydroxyacid dehydrogenase family. PdxB subfamily. As to quaternary structure, homodimer.

Its subcellular location is the cytoplasm. The enzyme catalyses 4-phospho-D-erythronate + NAD(+) = (R)-3-hydroxy-2-oxo-4-phosphooxybutanoate + NADH + H(+). The protein operates within cofactor biosynthesis; pyridoxine 5'-phosphate biosynthesis; pyridoxine 5'-phosphate from D-erythrose 4-phosphate: step 2/5. Its function is as follows. Catalyzes the oxidation of erythronate-4-phosphate to 3-hydroxy-2-oxo-4-phosphonooxybutanoate. The chain is Erythronate-4-phosphate dehydrogenase from Escherichia coli O81 (strain ED1a).